Here is a 782-residue protein sequence, read N- to C-terminus: CHFKHRKQRFVDIGDSLLTLKLTHALSSSVQNFPSDAIKILNRLEELDLSNNRLRNVPDNSFHFLRSLKKVHLQDNTIEMIHRGTFQGDIHRDLTEVYFSFNSVRNVQQHTFADLIQLEQIHLDDNRIESLERRAFMNLKSLKRLNLKGNKIATIAYETFQNLPELEDLDLAYNSISSLDFNIFDQVGSLGMFHVNMSHNKLINLVVAPSVPFEQDTGLGGLQNIKVLDLSFNNITSVAKQFFRPVELSLMQLYLGHNKLLNATKDLFGNMPHLQVLDLSHNSLYELDFDTFRNTKKLQWLDTSHNRISEIPNDLFRFLGNLRIVDFSHNRLRSLPDNLFRETGLERLDVSHNLLGKLPLTSLSLASAQTLSELDLSWNSISSLSHGGQLARFKCLSWLDLSYNRLGQIDAGTFKGIPRLASLNLGHNSQLTLEINGLSFQGLEYTLLHLNLDNVSLSQVPALSTPNLLSLSLAFNSLPTVALEVAGNISSLRYLNLDYNDLSAVPIVTHSLTELRHLSLEGNPITTLSNTSLLGAANQLEELNLKNIDLTVLESGAFCKMQPLRTLKIGVYRNIKNFNIPSILQFNDGLKNLEIHVTKDTDTLDNEMRGAWPLKLQNLTLSGKGLKKITGKMFQGVRSPTFHLTVRNTSIIKIPFDVFRNMLPVRNVSVDVRDNILLKNLQNPSTGSKPGKPRSAFLTDLKLMGGKWSCDCDLGWVEVWERKRRQYLCPVLLRVSILRNIIVGTLMMVLGTGCVRIKITGVWLKFLRVILSVVGVKLRWRN.

LRR repeat units follow at residues 16–37 (SLLT…PSDA), 43–64 (RLEE…SFHF), 67–88 (SLKK…TFQG), 93–114 (DLTE…TFAD), 117–138 (QLEQ…AFMN), 141–162 (SLKR…TFQN), 165–186 (ELED…IFDQ), 191–212 (GMFH…PSVP), 224–245 (NIKV…FFRP), 249–270 (SLMQ…LFGN), 273–294 (HLQV…TFRN), 297–318 (KLQW…LFRF), 321–342 (NLRI…LFRE), 344–364 (GLER…TSLS), 370–391 (TLSE…GQLA), 395–416 (CLSW…TFKG), 419–442 (RLAS…SFQG), 446–467 (TLLH…STPN), 468–488 (LLSL…VAGN), 491–512 (SLRY…THSL), 514–535 (ELRH…SLLG), and 539–560 (QLEE…AFCK). N-linked (GlcNAc...) asparagine glycosylation is found at N196, N234, and N262. 2 N-linked (GlcNAc...) asparagine glycosylation sites follow: N454 and N488. N-linked (GlcNAc...) asparagine glycosylation is present at N530. N-linked (GlcNAc...) asparagine glycosylation is found at N618, N648, and N667.

The protein belongs to the chaoptin family.

The protein resides in the cell membrane. Functionally, required for photoreceptor cell morphogenesis. Mediates homophilic cellular adhesion. This chain is Chaoptin (CHP), found in Tribolium castaneum (Red flour beetle).